Here is an 814-residue protein sequence, read N- to C-terminus: Outer membrane usher protein SefC (814 aa).

An N-terminal signal peptide occupies residues Met-1 to Gly-30. The cysteines at positions 792 and 813 are disulfide-linked.

It belongs to the fimbrial export usher family.

It localises to the cell outer membrane. Involved in the export and assembly of the SefA fimbrial subunit. The polypeptide is Outer membrane usher protein SefC (sefC) (Salmonella enteritidis).